The following is a 606-amino-acid chain: Adenine deaminase (606 aa).

The protein belongs to the metallo-dependent hydrolases superfamily. Adenine deaminase family. Mn(2+) serves as cofactor.

It catalyses the reaction adenine + H2O + H(+) = hypoxanthine + NH4(+). In Rubrobacter xylanophilus (strain DSM 9941 / JCM 11954 / NBRC 16129 / PRD-1), this protein is Adenine deaminase.